We begin with the raw amino-acid sequence, 198 residues long: MSSARELLRKVKQERLGQKRGLKASSQELKRQKTRDHKSFENLGRDQSRELAVSDFNEKQSTEPPKDTRAVSALPENFFDESIAKNKELIEEEWNDFQNEIGIIEENAVEQEITLQQQQLLAEKDEENEIADNDLEPEVYDILYEEESKLGESRDLIRRLKQKRFETKKNNFSVKESSNLSNNDSDASLDEDTLLWGL.

Disordered stretches follow at residues 15–69 (RLGQ…KDTR) and 172–198 (FSVK…LWGL). 2 stretches are compositionally biased toward basic and acidic residues: residues 37–49 (HKSF…DQSR) and 56–69 (FNEK…KDTR). The span at 176-186 (ESSNLSNNDSD) shows a compositional bias: low complexity. Over residues 187–198 (ASLDEDTLLWGL) the composition is skewed to acidic residues.

The protein resides in the nucleus. This is an uncharacterized protein from Schizosaccharomyces pombe (strain 972 / ATCC 24843) (Fission yeast).